We begin with the raw amino-acid sequence, 371 residues long: 4-hydroxy-3-methylbut-2-en-1-yl diphosphate synthase (flavodoxin) (371 aa).

C270, C273, C305, and E312 together coordinate [4Fe-4S] cluster.

This sequence belongs to the IspG family. [4Fe-4S] cluster serves as cofactor.

The catalysed reaction is (2E)-4-hydroxy-3-methylbut-2-enyl diphosphate + oxidized [flavodoxin] + H2O + 2 H(+) = 2-C-methyl-D-erythritol 2,4-cyclic diphosphate + reduced [flavodoxin]. Its pathway is isoprenoid biosynthesis; isopentenyl diphosphate biosynthesis via DXP pathway; isopentenyl diphosphate from 1-deoxy-D-xylulose 5-phosphate: step 5/6. Converts 2C-methyl-D-erythritol 2,4-cyclodiphosphate (ME-2,4cPP) into 1-hydroxy-2-methyl-2-(E)-butenyl 4-diphosphate. This chain is 4-hydroxy-3-methylbut-2-en-1-yl diphosphate synthase (flavodoxin), found in Shewanella sediminis (strain HAW-EB3).